A 177-amino-acid chain; its full sequence is Large ribosomal subunit protein uL6 (177 aa).

The protein belongs to the universal ribosomal protein uL6 family. In terms of assembly, part of the 50S ribosomal subunit.

In terms of biological role, this protein binds to the 23S rRNA, and is important in its secondary structure. It is located near the subunit interface in the base of the L7/L12 stalk, and near the tRNA binding site of the peptidyltransferase center. This is Large ribosomal subunit protein uL6 from Vibrio vulnificus (strain CMCP6).